The primary structure comprises 344 residues: Tetraacyldisaccharide 4'-kinase (344 aa).

An ATP-binding site is contributed by 65–72 (HAGGTGKT).

This sequence belongs to the LpxK family.

It catalyses the reaction a lipid A disaccharide + ATP = a lipid IVA + ADP + H(+). It participates in glycolipid biosynthesis; lipid IV(A) biosynthesis; lipid IV(A) from (3R)-3-hydroxytetradecanoyl-[acyl-carrier-protein] and UDP-N-acetyl-alpha-D-glucosamine: step 6/6. In terms of biological role, transfers the gamma-phosphate of ATP to the 4'-position of a tetraacyldisaccharide 1-phosphate intermediate (termed DS-1-P) to form tetraacyldisaccharide 1,4'-bis-phosphate (lipid IVA). This is Tetraacyldisaccharide 4'-kinase from Neisseria meningitidis serogroup B (strain ATCC BAA-335 / MC58).